Consider the following 198-residue polypeptide: Alkyl hydroperoxide reductase C (198 aa).

The Thioredoxin domain occupies Thr2–Phe163. Cys50 (cysteine sulfenic acid (-SOH) intermediate) is an active-site residue.

This sequence belongs to the peroxiredoxin family. AhpC/Prx1 subfamily. Homodimer; disulfide-linked, upon oxidation. 5 homodimers assemble to form a ring-like decamer.

The protein localises to the cytoplasm. The catalysed reaction is a hydroperoxide + NADH + H(+) = an alcohol + NAD(+) + H2O. In terms of biological role, thiol-specific peroxidase that catalyzes the reduction of hydrogen peroxide and organic hydroperoxides to water and alcohols, respectively. Plays a role in cell protection against oxidative stress by detoxifying peroxides. This chain is Alkyl hydroperoxide reductase C, found in Buchnera aphidicola subsp. Schizaphis graminum (strain Sg).